We begin with the raw amino-acid sequence, 159 residues long: Putative 4-hydroxy-4-methyl-2-oxoglutarate aldolase (159 aa).

Residues 75–78 and Arg97 each bind substrate; that span reads GDQL. Asp98 lines the a divalent metal cation pocket.

It belongs to the class II aldolase/RraA-like family. Homotrimer. A divalent metal cation is required as a cofactor.

The enzyme catalyses 4-hydroxy-4-methyl-2-oxoglutarate = 2 pyruvate. The catalysed reaction is oxaloacetate + H(+) = pyruvate + CO2. In terms of biological role, catalyzes the aldol cleavage of 4-hydroxy-4-methyl-2-oxoglutarate (HMG) into 2 molecules of pyruvate. Also contains a secondary oxaloacetate (OAA) decarboxylase activity due to the common pyruvate enolate transition state formed following C-C bond cleavage in the retro-aldol and decarboxylation reactions. In Aromatoleum aromaticum (strain DSM 19018 / LMG 30748 / EbN1) (Azoarcus sp. (strain EbN1)), this protein is Putative 4-hydroxy-4-methyl-2-oxoglutarate aldolase.